Here is a 311-residue protein sequence, read N- to C-terminus: Tyrosine recombinase XerC (311 aa).

The Core-binding (CB) domain occupies 14–100; sequence ESLNETAKKF…SLRTFYKVLL (87 aa). The Tyr recombinase domain occupies 121 to 303; that stretch reads EVPKNFRINE…SKEKIKEVYR (183 aa). Active-site residues include arginine 163, lysine 187, histidine 255, arginine 258, and histidine 281. Tyrosine 290 acts as the O-(3'-phospho-DNA)-tyrosine intermediate in catalysis.

Belongs to the 'phage' integrase family. XerC subfamily. As to quaternary structure, forms a cyclic heterotetrameric complex composed of two molecules of XerC and two molecules of XerD.

The protein resides in the cytoplasm. Functionally, site-specific tyrosine recombinase, which acts by catalyzing the cutting and rejoining of the recombining DNA molecules. The XerC-XerD complex is essential to convert dimers of the bacterial chromosome into monomers to permit their segregation at cell division. It also contributes to the segregational stability of plasmids. The sequence is that of Tyrosine recombinase XerC from Leptospira interrogans serogroup Icterohaemorrhagiae serovar copenhageni (strain Fiocruz L1-130).